A 563-amino-acid chain; its full sequence is MLEEAGEVLENVLKASCLPLGFIVFLPAVLLLVAPPLPAADAAHEFTVYRMQQYDLQGQPYGTRNAVLNTEARTVDADVLSRRCVLMRLLDFSYEHYQKALRQSAGAVVIILPRAMAAVPQDVVRQFMEIEPEMLAMETVVPVYFAVEDEALLSIYEQTQAASASQGSASAAEVLLHTATANGFQMVTSGAQSQAVSDWLITSVEGRLTGLGGEDLPTIVIVAHYDAFGVAPWLSLGADSNGSGISVLLELARLFSRLYTYKRTHAAYNLLFFASGGGKFNYQGTKRWLEDSLDHTDSSLLQDNVAFVLCLDTVGRGSHLRLHVSKPPREGTLQHVFLRELEMVAAHQFPDVSFSMVHKKINLADDVLAWEHERFAIRRLPAFTLSHLENHRAGPRSSIMDVRSRVDSKTLTRNTRIIAEALTRVIYNLTEKGTPPDMPVFTEQMQVQQEQIDSVMDWLTNQPRAAQLLDKDGTFLSTLEHFLSRYLKDVRQHHVKADKRDPEFVFYDQLKQVMNAYRVKPAIFDLLLALCIGAYLGMAYTAVQHFHVLYKTVQRLLLKAKAQ.

The first 42 residues, 1-42 (MLEEAGEVLENVLKASCLPLGFIVFLPAVLLLVAPPLPAADA), serve as a signal peptide directing secretion. The Lumenal portion of the chain corresponds to 43-522 (AHEFTVYRMQ…VMNAYRVKPA (480 aa)). Residues Asn-241 and Asn-428 are each glycosylated (N-linked (GlcNAc...) asparagine). A helical membrane pass occupies residues 523-543 (IFDLLLALCIGAYLGMAYTAV). At 544–563 (QHFHVLYKTVQRLLLKAKAQ) the chain is on the cytoplasmic side.

This sequence belongs to the nicastrin family. As to quaternary structure, component of the back of Sec61 (BOS) complex, composed of NCLN/Nicalin, NOMO1 and TMEM147. The BOS complex is part of the multi-pass translocon (MPT) complex, composed of three subcomplexes, the GEL complex (composed of RAB5IF/OPTI and TMCO1), the BOS complex (composed of NCLN/Nicalin, NOMO1 and TMEM147) and the PAT complex (composed of WDR83OS/Asterix and CCDC47). The MPT complex associates with the SEC61 complex.

The protein resides in the endoplasmic reticulum membrane. Component of the multi-pass translocon (MPT) complex that mediates insertion of multi-pass membrane proteins into the lipid bilayer of membranes. The MPT complex takes over after the SEC61 complex: following membrane insertion of the first few transmembrane segments of proteins by the SEC61 complex, the MPT complex occludes the lateral gate of the SEC61 complex to promote insertion of subsequent transmembrane regions. May antagonize Nodal signaling and subsequent organization of axial structures during mesodermal patterning, via its interaction with NOMO. The polypeptide is BOS complex subunit NCLN (Ncln) (Rattus norvegicus (Rat)).